A 254-amino-acid chain; its full sequence is 3-oxo-5-alpha-steroid 4-dehydrogenase 2 (254 aa).

The next 4 helical transmembrane spans lie at 8 to 28, 72 to 92, 146 to 166, and 206 to 226; these read VPVL…LCLG, PRSL…AHYF, FSFG…SDYT, and LATW…FLGM.

It belongs to the steroid 5-alpha reductase family. Expressed in high levels in the prostate and many other androgen-sensitive tissues.

It is found in the microsome membrane. It localises to the endoplasmic reticulum membrane. It catalyses the reaction a 3-oxo-5alpha-steroid + NADP(+) = a 3-oxo-Delta(4)-steroid + NADPH + H(+). The catalysed reaction is 17beta-hydroxy-5alpha-androstan-3-one + NADP(+) = testosterone + NADPH + H(+). The enzyme catalyses 5alpha-pregnane-3,20-dione + NADP(+) = progesterone + NADPH + H(+). Converts testosterone (T) into 5-alpha-dihydrotestosterone (DHT) and progesterone or corticosterone into their corresponding 5-alpha-3-oxosteroids. It plays a central role in sexual differentiation and androgen physiology. This chain is 3-oxo-5-alpha-steroid 4-dehydrogenase 2 (Srd5a2), found in Rattus norvegicus (Rat).